The primary structure comprises 609 residues: DNA mismatch repair protein MutL (609 aa).

Belongs to the DNA mismatch repair MutL/HexB family.

Its function is as follows. This protein is involved in the repair of mismatches in DNA. It is required for dam-dependent methyl-directed DNA mismatch repair. May act as a 'molecular matchmaker', a protein that promotes the formation of a stable complex between two or more DNA-binding proteins in an ATP-dependent manner without itself being part of a final effector complex. In Rickettsia felis (strain ATCC VR-1525 / URRWXCal2) (Rickettsia azadi), this protein is DNA mismatch repair protein MutL.